Consider the following 118-residue polypeptide: Small ribosomal subunit protein uS13 (118 aa).

The segment at 94–118 (GLPVRGQRTKTNARTRKGPRKPIKK) is disordered.

Belongs to the universal ribosomal protein uS13 family. Part of the 30S ribosomal subunit. Forms a loose heterodimer with protein S19. Forms two bridges to the 50S subunit in the 70S ribosome.

Its function is as follows. Located at the top of the head of the 30S subunit, it contacts several helices of the 16S rRNA. In the 70S ribosome it contacts the 23S rRNA (bridge B1a) and protein L5 of the 50S subunit (bridge B1b), connecting the 2 subunits; these bridges are implicated in subunit movement. Contacts the tRNAs in the A and P-sites. The sequence is that of Small ribosomal subunit protein uS13 from Mannheimia succiniciproducens (strain KCTC 0769BP / MBEL55E).